A 274-amino-acid polypeptide reads, in one-letter code: 2-dehydro-3-deoxyphosphooctonate aldolase (274 aa).

This sequence belongs to the KdsA family.

The protein localises to the cytoplasm. It catalyses the reaction D-arabinose 5-phosphate + phosphoenolpyruvate + H2O = 3-deoxy-alpha-D-manno-2-octulosonate-8-phosphate + phosphate. It functions in the pathway carbohydrate biosynthesis; 3-deoxy-D-manno-octulosonate biosynthesis; 3-deoxy-D-manno-octulosonate from D-ribulose 5-phosphate: step 2/3. Its pathway is bacterial outer membrane biogenesis; lipopolysaccharide biosynthesis. The sequence is that of 2-dehydro-3-deoxyphosphooctonate aldolase from Rickettsia canadensis (strain McKiel).